Reading from the N-terminus, the 116-residue chain is Ribonuclease P protein component (116 aa).

It belongs to the RnpA family. As to quaternary structure, consists of a catalytic RNA component (M1 or rnpB) and a protein subunit.

It catalyses the reaction Endonucleolytic cleavage of RNA, removing 5'-extranucleotides from tRNA precursor.. Functionally, RNaseP catalyzes the removal of the 5'-leader sequence from pre-tRNA to produce the mature 5'-terminus. It can also cleave other RNA substrates such as 4.5S RNA. The protein component plays an auxiliary but essential role in vivo by binding to the 5'-leader sequence and broadening the substrate specificity of the ribozyme. This Leuconostoc mesenteroides subsp. mesenteroides (strain ATCC 8293 / DSM 20343 / BCRC 11652 / CCM 1803 / JCM 6124 / NCDO 523 / NBRC 100496 / NCIMB 8023 / NCTC 12954 / NRRL B-1118 / 37Y) protein is Ribonuclease P protein component.